The sequence spans 529 residues: N5-hydroxyornithine acetylase sidL (529 aa).

Disordered stretches follow at residues 59-95 (ASVNGEGHAQPAGDDHATAVDAGDGSAQKRKKRVRPF) and 239-258 (SPWPGSSGSPNDSRPGSPVA). His-462 serves as a coordination point for substrate. Glu-498 serves as the catalytic Proton acceptor.

This sequence belongs to the lysine N-acyltransferase mbtK family.

The protein localises to the cytoplasm. The protein resides in the cytosol. The protein operates within siderophore biosynthesis. Its function is as follows. Acyltransferase; part of the gene cluster that mediates the biosynthesis of at least 11 siderophores, including beauverichelin A, dimerumic acid (DA), Na-dimethyl coprogen (NADC), eleutherazine B, ferricrocin (FC), fusarinine A, fusarinine C (FsC), metachelin A, mevalonolactone, rhodotorulic acid (RA) and tenellin. This cocktail of siderophores for iron metabolism is essential for virulence, and more specifically for the fungal virulence in penetrating through the host cuticle. Siderophore synthesis is also involved in conidial germination under iron-deficient conditions. SIDL contributes to partial production of ferricrocin under iron-limiting conditions via the acetylation of N(5)-hydroxyornithine. The chain is N5-hydroxyornithine acetylase sidL from Beauveria bassiana (strain ARSEF 2860) (White muscardine disease fungus).